We begin with the raw amino-acid sequence, 223 residues long: DNA replication complex GINS protein SLD5 (223 aa).

Position 1 is an N-acetylmethionine (Met1). Thr2 bears the N-acetylthreonine; in DNA replication complex GINS protein SLD5, N-terminally processed mark. Residues Ser12 and Ser16 each carry the phosphoserine modification. An important for GINS complex assembly region spans residues 166-223 (DLDSYVFLRVKERQENILVEPEADEQRDYVIDLEVGSQHLIRYKTIAPLVASGAVQLI).

The protein belongs to the GINS4/SLD5 family. In terms of assembly, component of the CMG helicase complex, a hexameric ring of related MCM2-7 subunits stabilized by CDC45 and the tetrameric GINS complex. Associated with ORC2. Interacts with HELB. In terms of tissue distribution, highly abundant in testis. Weakly expressed in thymus and bone marrow.

The protein resides in the nucleus. It is found in the chromosome. The protein localises to the cytoplasm. Its function is as follows. Required for initiation of chromosomal DNA replication. Core component of CDC45-MCM-GINS (CMG) helicase, the molecular machine that unwinds template DNA during replication, and around which the replisome is built. The polypeptide is DNA replication complex GINS protein SLD5 (Gins4) (Mus musculus (Mouse)).